We begin with the raw amino-acid sequence, 60 residues long: Mastoparan-VB1 (60 aa).

The signal sequence occupies residues 1-23 (MKNTILLLFTAFIFLSGFFGMSA). Residues 24 to 45 (EALADPKADPLAGPFPDADPDP) constitute a propeptide that is removed on maturation. 4 AXPX repeats span residues 27 to 30 (ADPK), 31 to 34 (ADPL), 35 to 38 (AGPF), and 40 to 43 (DADP). Leu59 is modified (leucine amide).

As to expression, expressed by the venom gland.

The protein localises to the secreted. It localises to the target cell membrane. Antimicrobial peptide. Shows activity against both Gram-positive (S.aureus MIC=1.9-3.75 ug/ml) and -negative (E.coli MIC=15-60 ug/ml) bacteria, as well against fungi (C.albicans MIC=15 ug/ml). Also promotes moderate mast cell degranulation. Does not show hemolytic activity on rabbit and human erythrocytes. Its mast cell degranulation activity may be related to the activation of G-protein coupled receptors in mast cells as well as interaction with other proteins located in cell endosomal membranes in the mast cells. The polypeptide is Mastoparan-VB1 (Vespa bicolor (Black shield wasp)).